The following is a 159-amino-acid chain: MINYLKSFFLYEIVRGMALTLKYFFKPKVTINYPYEKSPISPRFKGEHALRRYEHGEERCIACKLCEAICPAQAIVIEADEREDGSRRTTRYDIDMTKCIYCGLCQEACPVDAIVEGPNFEFASLTHTALIYDKERLLQNGDRWEQALASKLHKDYEYR.

2 consecutive 4Fe-4S ferredoxin-type domains span residues 51–80 and 90–119; these read RRYE…IEAD and TRYD…EGPN. Cysteine 60, cysteine 63, cysteine 66, cysteine 70, cysteine 99, cysteine 102, cysteine 105, and cysteine 109 together coordinate [4Fe-4S] cluster.

It belongs to the complex I 23 kDa subunit family. NDH-1 is composed of 14 different subunits. Subunits NuoA, H, J, K, L, M, N constitute the membrane sector of the complex. [4Fe-4S] cluster is required as a cofactor.

It is found in the cell inner membrane. The catalysed reaction is a quinone + NADH + 5 H(+)(in) = a quinol + NAD(+) + 4 H(+)(out). NDH-1 shuttles electrons from NADH, via FMN and iron-sulfur (Fe-S) centers, to quinones in the respiratory chain. The immediate electron acceptor for the enzyme in this species is believed to be ubiquinone. Couples the redox reaction to proton translocation (for every two electrons transferred, four hydrogen ions are translocated across the cytoplasmic membrane), and thus conserves the redox energy in a proton gradient. The sequence is that of NADH-quinone oxidoreductase subunit I from Rickettsia rickettsii (strain Sheila Smith).